Reading from the N-terminus, the 202-residue chain is CASP-like protein 2B2 (202 aa).

At 1–29 (MSYLGVGVSPGNVPVYHGMNLKVIDRRVR) the chain is on the cytoplasmic side. Residues 30-50 (LAELVLRCVICALGVLAAVLV) traverse the membrane as a helical segment. Residues 51–72 (GTDTQVKEIFSIQKKARFTDMK) lie on the Extracellular side of the membrane. The chain crosses the membrane as a helical span at residues 73 to 93 (ALVFLVVANGIAAAYSLVQGV). At 94-118 (RCVVGMVKGSVLFSKPLAWVIFSGD) the chain is on the cytoplasmic side. A helical membrane pass occupies residues 119–139 (QMMAYLTLSAVAAAVQSASFA). Topologically, residues 140–164 (KLGQPDLQWMKICNMYGKFCNQVGE) are extracellular. The chain crosses the membrane as a helical span at residues 165 to 185 (GIASALLVSVSMVVLSCISSF). The Cytoplasmic portion of the chain corresponds to 186-202 (SLFRLYGGNKGKDGARW).

This sequence belongs to the Casparian strip membrane proteins (CASP) family. As to quaternary structure, homodimer and heterodimers.

The protein localises to the cell membrane. The chain is CASP-like protein 2B2 from Populus trichocarpa (Western balsam poplar).